The chain runs to 123 residues: WAP four-disulfide core domain protein 5 (123 aa).

A signal peptide spans M1–G24. WAP domains are found at residues K27–R73 and V74–A121. 8 cysteine pairs are disulfide-bonded: C34-C62, C41-C66, C49-C61, C55-C70, C81-C109, C88-C113, C96-C108, and C102-C117.

The protein resides in the secreted. In terms of biological role, putative acid-stable proteinase inhibitor. The chain is WAP four-disulfide core domain protein 5 (WFDC5) from Chlorocebus aethiops (Green monkey).